The chain runs to 385 residues: MIYFDNSATTKMAPKALETYSQVVTKIWGNPSSLHKLGDRAHGLLEASRKQVADLLGVNTDEIYFTSGGTESNNTAIKGTAWAKREFGKHIITSSVEHASVANTFTELENLGFRVTRLPVDKEGRVNPEDLKAALDKDTTLVSIMGVNNEIGTIQPIKEISEILADYPNIHFHVDNVQALGKGIWDQVFTSRVDMMSFSSHKFHGPRGIGILYKKRGRMLMPLCEGGGQEKGLRSGTENLAAIAAMAKAARLLLTDEKEKADREYAIKEKISKYLAGKPGIHIFSPLKADFAPHILCFALEGIRGETLVHTLEDQDIYISTTSACASKKADEASTLVAMKTPDAIATSAVRLSFDESNTLEEADEFIAAFDEIYQHFSKINHLGE.

Pyridoxal 5'-phosphate contacts are provided by residues 69-70 (GT), N149, Q178, and 199-201 (SSH). Position 202 is an N6-(pyridoxal phosphate)lysine (K202). T237 is a pyridoxal 5'-phosphate binding site. Residue C325 is the Cysteine persulfide intermediate of the active site. C325 is a binding site for [2Fe-2S] cluster.

This sequence belongs to the class-V pyridoxal-phosphate-dependent aminotransferase family. NifS/IscS subfamily. Pyridoxal 5'-phosphate serves as cofactor.

This Lactobacillus delbrueckii subsp. bulgaricus (strain ATCC 11842 / DSM 20081 / BCRC 10696 / JCM 1002 / NBRC 13953 / NCIMB 11778 / NCTC 12712 / WDCM 00102 / Lb 14) protein is NifS/IcsS protein homolog.